The chain runs to 360 residues: Phospho-N-acetylmuramoyl-pentapeptide-transferase (360 aa).

A run of 10 helical transmembrane segments spans residues Ala26–Ala46, Pro72–Tyr92, Ser94–Val114, Trp132–Gly152, Val168–Gly188, Gly199–Thr219, Ala236–Phe256, Val263–Leu283, Phe288–Val308, and Val338–Lys358.

This sequence belongs to the glycosyltransferase 4 family. MraY subfamily. Requires Mg(2+) as cofactor.

It localises to the cell inner membrane. The enzyme catalyses UDP-N-acetyl-alpha-D-muramoyl-L-alanyl-gamma-D-glutamyl-meso-2,6-diaminopimeloyl-D-alanyl-D-alanine + di-trans,octa-cis-undecaprenyl phosphate = di-trans,octa-cis-undecaprenyl diphospho-N-acetyl-alpha-D-muramoyl-L-alanyl-D-glutamyl-meso-2,6-diaminopimeloyl-D-alanyl-D-alanine + UMP. It participates in cell wall biogenesis; peptidoglycan biosynthesis. Its function is as follows. Catalyzes the initial step of the lipid cycle reactions in the biosynthesis of the cell wall peptidoglycan: transfers peptidoglycan precursor phospho-MurNAc-pentapeptide from UDP-MurNAc-pentapeptide onto the lipid carrier undecaprenyl phosphate, yielding undecaprenyl-pyrophosphoryl-MurNAc-pentapeptide, known as lipid I. In Enterobacter sp. (strain 638), this protein is Phospho-N-acetylmuramoyl-pentapeptide-transferase.